A 277-amino-acid polypeptide reads, in one-letter code: 4-hydroxy-tetrahydrodipicolinate reductase (277 aa).

G9 to M14 is an NAD(+) binding site. An NADP(+)-binding site is contributed by K37. G75–S77 is a binding site for NAD(+). H132 serves as the catalytic Proton donor/acceptor. The Proton donor role is filled by K136. Residue G142 to T143 participates in (S)-2,3,4,5-tetrahydrodipicolinate binding. The interval S245 to A277 is disordered.

Belongs to the DapB family.

It is found in the cytoplasm. The enzyme catalyses (S)-2,3,4,5-tetrahydrodipicolinate + NAD(+) + H2O = (2S,4S)-4-hydroxy-2,3,4,5-tetrahydrodipicolinate + NADH + H(+). It carries out the reaction (S)-2,3,4,5-tetrahydrodipicolinate + NADP(+) + H2O = (2S,4S)-4-hydroxy-2,3,4,5-tetrahydrodipicolinate + NADPH + H(+). Its pathway is amino-acid biosynthesis; L-lysine biosynthesis via DAP pathway; (S)-tetrahydrodipicolinate from L-aspartate: step 4/4. Catalyzes the conversion of 4-hydroxy-tetrahydrodipicolinate (HTPA) to tetrahydrodipicolinate. This is 4-hydroxy-tetrahydrodipicolinate reductase from Clavibacter sepedonicus (Clavibacter michiganensis subsp. sepedonicus).